We begin with the raw amino-acid sequence, 451 residues long: UDP-N-acetylmuramate--L-alanine ligase (451 aa).

110-116 contacts ATP; it reads GTHGKTT.

It belongs to the MurCDEF family.

The protein localises to the cytoplasm. It carries out the reaction UDP-N-acetyl-alpha-D-muramate + L-alanine + ATP = UDP-N-acetyl-alpha-D-muramoyl-L-alanine + ADP + phosphate + H(+). The protein operates within cell wall biogenesis; peptidoglycan biosynthesis. Its function is as follows. Cell wall formation. The protein is UDP-N-acetylmuramate--L-alanine ligase of Francisella tularensis subsp. tularensis (strain WY96-3418).